A 386-amino-acid polypeptide reads, in one-letter code: Succinyl-diaminopimelate desuccinylase (386 aa).

His-72 serves as a coordination point for Zn(2+). Asp-74 is a catalytic residue. Asp-105 contributes to the Zn(2+) binding site. Residue Glu-139 is the Proton acceptor of the active site. Glu-140, Glu-168, and His-353 together coordinate Zn(2+).

The protein belongs to the peptidase M20A family. DapE subfamily. In terms of assembly, homodimer. Requires Zn(2+) as cofactor. It depends on Co(2+) as a cofactor.

It catalyses the reaction N-succinyl-(2S,6S)-2,6-diaminopimelate + H2O = (2S,6S)-2,6-diaminopimelate + succinate. Its pathway is amino-acid biosynthesis; L-lysine biosynthesis via DAP pathway; LL-2,6-diaminopimelate from (S)-tetrahydrodipicolinate (succinylase route): step 3/3. In terms of biological role, catalyzes the hydrolysis of N-succinyl-L,L-diaminopimelic acid (SDAP), forming succinate and LL-2,6-diaminopimelate (DAP), an intermediate involved in the bacterial biosynthesis of lysine and meso-diaminopimelic acid, an essential component of bacterial cell walls. The sequence is that of Succinyl-diaminopimelate desuccinylase from Rhodospirillum centenum (strain ATCC 51521 / SW).